The chain runs to 186 residues: TATA-box-binding protein 2 (186 aa).

2 tandem repeats follow at residues 10 to 86 (IQNV…FDKL) and 101 to 179 (VQNI…VERI). Glycyl lysine isopeptide (Lys-Gly) (interchain with G-Cter in SAMP2) cross-links involve residues lysine 53 and lysine 63.

Belongs to the TBP family.

In terms of biological role, general factor that plays a role in the activation of archaeal genes transcribed by RNA polymerase. Binds specifically to the TATA box promoter element which lies close to the position of transcription initiation. The sequence is that of TATA-box-binding protein 2 (tbp2) from Haloferax volcanii (strain ATCC 29605 / DSM 3757 / JCM 8879 / NBRC 14742 / NCIMB 2012 / VKM B-1768 / DS2) (Halobacterium volcanii).